Consider the following 612-residue polypeptide: Chaperone protein DnaK (612 aa).

Thr-173 is subject to Phosphothreonine; by autocatalysis. Positions 524 to 544 are enriched in basic and acidic residues; the sequence is DDKVSEEDKQKAESAKDELKQ. Disordered regions lie at residues 524–560 and 572–612; these read DDKV…KKDA and LYEQ…DDKK. Over residues 574 to 586 the composition is skewed to low complexity; that stretch reads EQVQQEAQQASGE. The span at 587 to 612 shows a compositional bias: acidic residues; sequence QGEESGNQDDDVVDADYSEVDDDDKK.

It belongs to the heat shock protein 70 family.

In terms of biological role, acts as a chaperone. In Oceanobacillus iheyensis (strain DSM 14371 / CIP 107618 / JCM 11309 / KCTC 3954 / HTE831), this protein is Chaperone protein DnaK.